The sequence spans 160 residues: Putative antiporter subunit mnhE2 (160 aa).

A run of 3 helical transmembrane segments spans residues 22-42 (SFQF…IYIL), 61-81 (FLGV…NYIL), and 102-122 (WAIT…VIRI).

This sequence belongs to the CPA3 antiporters (TC 2.A.63) subunit E family. As to quaternary structure, may form a heterooligomeric complex that consists of seven subunits: mnhA2, mnhB2, mnhC2, mnhD2, mnhE2, mnhF2 and mnhG2.

The protein resides in the cell membrane. In Staphylococcus haemolyticus (strain JCSC1435), this protein is Putative antiporter subunit mnhE2 (mnhE2).